Reading from the N-terminus, the 249-residue chain is Triosephosphate isomerase (249 aa).

9–11 serves as a coordination point for substrate; it reads NWK. Catalysis depends on H94, which acts as the Electrophile. Catalysis depends on E166, which acts as the Proton acceptor. Substrate is bound by residues G172 and 232 to 233; that span reads GG.

This sequence belongs to the triosephosphate isomerase family. Homodimer.

The protein localises to the cytoplasm. The enzyme catalyses D-glyceraldehyde 3-phosphate = dihydroxyacetone phosphate. Its pathway is carbohydrate biosynthesis; gluconeogenesis. The protein operates within carbohydrate degradation; glycolysis; D-glyceraldehyde 3-phosphate from glycerone phosphate: step 1/1. Functionally, involved in the gluconeogenesis. Catalyzes stereospecifically the conversion of dihydroxyacetone phosphate (DHAP) to D-glyceraldehyde-3-phosphate (G3P). This Xylella fastidiosa (strain M23) protein is Triosephosphate isomerase.